A 379-amino-acid chain; its full sequence is 3-dehydroquinate synthase (379 aa).

Residues 113-117 (GVIGD), 137-138 (TS), lysine 150, and lysine 159 contribute to the NAD(+) site. Zn(2+) is bound by residues glutamate 192, histidine 256, and histidine 274.

It belongs to the sugar phosphate cyclases superfamily. Dehydroquinate synthase family. The cofactor is Co(2+). Zn(2+) serves as cofactor. NAD(+) is required as a cofactor.

The protein resides in the cytoplasm. The catalysed reaction is 7-phospho-2-dehydro-3-deoxy-D-arabino-heptonate = 3-dehydroquinate + phosphate. It functions in the pathway metabolic intermediate biosynthesis; chorismate biosynthesis; chorismate from D-erythrose 4-phosphate and phosphoenolpyruvate: step 2/7. In terms of biological role, catalyzes the conversion of 3-deoxy-D-arabino-heptulosonate 7-phosphate (DAHP) to dehydroquinate (DHQ). The chain is 3-dehydroquinate synthase from Zymomonas mobilis subsp. mobilis (strain ATCC 31821 / ZM4 / CP4).